A 141-amino-acid polypeptide reads, in one-letter code: Transcription antitermination protein NusB (141 aa).

The protein belongs to the NusB family.

Involved in transcription antitermination. Required for transcription of ribosomal RNA (rRNA) genes. Binds specifically to the boxA antiterminator sequence of the ribosomal RNA (rrn) operons. This Neisseria meningitidis serogroup C (strain 053442) protein is Transcription antitermination protein NusB.